Reading from the N-terminus, the 481-residue chain is MQWEVVIGLEIHTQLTTQSKIFSGSSTAFGAEPNTQASLIDLGMPGVLPVLNQEAVRMAVMFGLAVDAEIGQHNVFARKNYFYPDLPKGYQISQMELPIVGKGHLDIPLEDGTMKRVGITRAHLEEDAGKSLHEEFNGATGIDLNRAGTPLLEIVSEPDMRSAKEAVAYVKSIHALVRYLGICDGNMAEGSLRCDCNVSIRPKGQVEFGTRCEIKNVNSFRFIEKAINSEIRRQIELIEDGGKVIQQTRLYDPNKDETRPMRSKEEANDYRYFPDPDLLPVVIEDSFLDQVRATLPELPPQKRERFQEQFGLSVYDASVLATSREQADYFEKVASIAGDAKLAANWVMVELGSLLNKQGLEIDEAPVSAEQLGGMLLRIKDNTISGKIAKTVFEAMANGEGNADEIIDKRGLKQVTDSGAISAVLDEMLAANAEQVEQYRAADEAKRGKMFGFFVGQAMKASKGKANPQQVNELLKSKLEG.

It belongs to the GatB/GatE family. GatB subfamily. Heterotrimer of A, B and C subunits.

It catalyses the reaction L-glutamyl-tRNA(Gln) + L-glutamine + ATP + H2O = L-glutaminyl-tRNA(Gln) + L-glutamate + ADP + phosphate + H(+). The enzyme catalyses L-aspartyl-tRNA(Asn) + L-glutamine + ATP + H2O = L-asparaginyl-tRNA(Asn) + L-glutamate + ADP + phosphate + 2 H(+). Allows the formation of correctly charged Asn-tRNA(Asn) or Gln-tRNA(Gln) through the transamidation of misacylated Asp-tRNA(Asn) or Glu-tRNA(Gln) in organisms which lack either or both of asparaginyl-tRNA or glutaminyl-tRNA synthetases. The reaction takes place in the presence of glutamine and ATP through an activated phospho-Asp-tRNA(Asn) or phospho-Glu-tRNA(Gln). This chain is Aspartyl/glutamyl-tRNA(Asn/Gln) amidotransferase subunit B, found in Pseudomonas fluorescens (strain ATCC BAA-477 / NRRL B-23932 / Pf-5).